The sequence spans 473 residues: Serine palmitoyltransferase 1 (473 aa).

Over Met1–Gln15 the chain is Lumenal. The interaction with SPTLC2 stretch occupies residues Met1–Pro66. A helical transmembrane segment spans residues Ala16–Ile36. Residues Arg37–Leu473 lie on the Cytoplasmic side of the membrane. Phosphotyrosine; by ABL is present on Tyr164.

It belongs to the class-II pyridoxal-phosphate-dependent aminotransferase family. As to quaternary structure, component of the serine palmitoyltransferase (SPT) complex, which is also composed of SPTLC2 or SPTLC3 and SPTSSA or SPTSSB. The heterodimer with SPTLC2 or SPTLC3 forms the catalytic core of the enzyme, while SPTSSA or SPTSSB subunits determine substrate specificity. SPT also interacts with ORMDL proteins, especially ORMDL3, which negatively regulate SPT activity in the presence of ceramides. Forms dimers of heterodimers with SPTLC2. Interacts with RTN4 (isoform B). It depends on pyridoxal 5'-phosphate as a cofactor. In terms of processing, phosphorylation at Tyr-164 inhibits activity and promotes cell survival. In terms of tissue distribution, expressed in a variety of tissues. Highest expression in brain, kidney and liver. Expressed in brown and white adipose tissues.

Its subcellular location is the endoplasmic reticulum membrane. The enzyme catalyses L-serine + hexadecanoyl-CoA + H(+) = 3-oxosphinganine + CO2 + CoA. The catalysed reaction is octadecanoyl-CoA + L-serine + H(+) = 3-oxoeicosasphinganine + CO2 + CoA. It catalyses the reaction tetradecanoyl-CoA + L-serine + H(+) = 3-oxohexadecasphinganine + CO2 + CoA. It carries out the reaction dodecanoyl-CoA + L-serine + H(+) = 3-oxotetradecasphinganine + CO2 + CoA. Its pathway is lipid metabolism; sphingolipid metabolism. With respect to regulation, SPT complex catalytic activity is negatively regulated by ORMDL proteins, including ORMDL3, in the presence of ceramides. This mechanism allows to maintain ceramide levels at sufficient concentrations for the production of complex sphingolipids, but which prevents the accumulation of ceramides to levels that trigger apoptosis. Its function is as follows. Component of the serine palmitoyltransferase multisubunit enzyme (SPT) that catalyzes the initial and rate-limiting step in sphingolipid biosynthesis by condensing L-serine and activated acyl-CoA (most commonly palmitoyl-CoA) to form long-chain bases. The SPT complex is also composed of SPTLC2 or SPTLC3 and SPTSSA or SPTSSB. Within this complex, the heterodimer with SPTLC2 or SPTLC3 forms the catalytic core. The composition of the serine palmitoyltransferase (SPT) complex determines the substrate preference. The SPTLC1-SPTLC2-SPTSSA complex shows a strong preference for C16-CoA substrate, while the SPTLC1-SPTLC3-SPTSSA isozyme uses both C14-CoA and C16-CoA as substrates, with a slight preference for C14-CoA. The SPTLC1-SPTLC2-SPTSSB complex shows a strong preference for C18-CoA substrate, while the SPTLC1-SPTLC3-SPTSSB isozyme displays an ability to use a broader range of acyl-CoAs, without apparent preference. Required for adipocyte cell viability and metabolic homeostasis. This Mus musculus (Mouse) protein is Serine palmitoyltransferase 1 (Sptlc1).